A 310-amino-acid chain; its full sequence is Olfactory receptor 9A2 (310 aa).

At 1–24 the chain is on the extracellular side; it reads MMDNHSSATEFHLLGFPGSQGLHH. N-linked (GlcNAc...) asparagine glycosylation is present at N4. Residues 25–45 form a helical membrane-spanning segment; it reads ILFAIFFFFYLVTLMGNTVII. Residues 46–53 lie on the Cytoplasmic side of the membrane; it reads VIVCVDKR. Residues 54–74 traverse the membrane as a helical segment; the sequence is LQSPMYFFLSHLSTLEILVTT. The Extracellular portion of the chain corresponds to 75-98; the sequence is IIVPMMLWGLLFLGCRQYLSLHVS. The Cytoplasmic portion of the chain corresponds to 117 to 135; it reads DRYVAVCNPLRYNIIMNSS. The helical transmembrane segment at 136-156 threads the bilayer; it reads TCIWVVIVSWVFGFLSEIWPI. The Extracellular segment spans residues 157–193; it reads YATFQFTFRKSNSLDHFYCDRGQLLKLSCDNTLLTEF. A helical membrane pass occupies residues 194–213; sequence ILFLMAVFILIGSLIPTIVS. Topologically, residues 214-233 are cytoplasmic; that stretch reads YTYIISTILKIPSASGRRKA. A helical transmembrane segment spans residues 234 to 254; sequence FSTFASHFTCVVIGYGSCLFL. Topologically, residues 255 to 267 are extracellular; the sequence is YVKPKQTQGVEYN. A helical transmembrane segment spans residues 268-288; the sequence is KIVSLLVSVLTPFLNPFIFTL. Residues 289 to 310 lie on the Cytoplasmic side of the membrane; it reads RNDKVKEALRDGMKRCCQLLKD.

This sequence belongs to the G-protein coupled receptor 1 family.

The protein localises to the cell membrane. In terms of biological role, odorant receptor. The sequence is that of Olfactory receptor 9A2 (OR9A2) from Homo sapiens (Human).